A 198-amino-acid chain; its full sequence is Mediator of RNA polymerase II transcription subunit 22 (198 aa).

Residues 159–198 (WGSPEMTSDPSHANHEVSDHLGSQESMQRHRNGSGTSEQS) form a disordered region.

The protein belongs to the Mediator complex subunit 22 family. In terms of assembly, component of the Mediator complex.

The protein resides in the nucleus. Its function is as follows. Component of the Mediator complex, a coactivator involved in the regulated transcription of nearly all RNA polymerase II-dependent genes. Mediator functions as a bridge to convey information from gene-specific regulatory proteins to the basal RNA polymerase II transcription machinery. Mediator is recruited to promoters by direct interactions with regulatory proteins and serves as a scaffold for the assembly of a functional preinitiation complex with RNA polymerase II and the general transcription factors. This Danio rerio (Zebrafish) protein is Mediator of RNA polymerase II transcription subunit 22 (med22).